The primary structure comprises 489 residues: Endothelial zinc finger protein induced by tumor necrosis factor alpha (489 aa).

The span at 1-15 (MKELDPKNDISEDKL) shows a compositional bias: basic and acidic residues. Disordered regions lie at residues 1–61 (MKEL…PLGI) and 98–122 (EKGA…KPPM). C2H2-type zinc fingers lie at residues 130–152 (YDCS…QRIH), 158–180 (FECD…QRVH), 186–208 (YACG…QRTH), 214–236 (YVCD…ERIH), 242–264 (YACG…QRTH), 270–292 (YVCP…QRTH), 298–320 (YACK…QRNH), 326–348 (YVCG…QRFH), 354–376 (FECS…QRIH), 382–404 (YECY…QIVH), 410–432 (YVCG…QRIH), 438–460 (YRCG…QRIH), and 466–488 (YRCG…LRIH).

Belongs to the krueppel C2H2-type zinc-finger protein family. Highly expressed in placenta, followed by brain, testis, pancreas, heart, small intestine, muscle, uterus, prostate and peripheral blood leukocytes. Not detected in liver, lung, colon, stomach, salivary and thyroid gland.

It localises to the nucleus. Functionally, may be involved in transcriptional regulation. The chain is Endothelial zinc finger protein induced by tumor necrosis factor alpha (ZNF71) from Homo sapiens (Human).